Reading from the N-terminus, the 554-residue chain is Bifunctional epoxide hydrolase 2 (554 aa).

The tract at residues methionine 1–alanine 224 is phosphatase. Aspartate 9 and aspartate 11 together coordinate Mg(2+). The residue at position 55 (lysine 55) is an N6-succinyllysine. Phosphate is bound at residue threonine 123–asparagine 124. Lysine 176 carries the N6-acetyllysine; alternate modification. Lysine 176 is subject to N6-succinyllysine; alternate. Aspartate 185 contributes to the Mg(2+) binding site. N6-acetyllysine is present on residues lysine 191 and lysine 215. Residues asparagine 233 to isoleucine 554 form an epoxide hydrolase region. The region spanning proline 257 to proline 530 is the AB hydrolase-1 domain. Aspartate 333 (nucleophile) is an active-site residue. Position 368 is a phosphoserine (serine 368). An N6-succinyllysine modification is found at lysine 371. Position 381 (tyrosine 381) interacts with substrate. Lysine 420 and lysine 454 each carry N6-succinyllysine. Tyrosine 465 functions as the Proton donor in the catalytic mechanism. Lysine 504 bears the N6-succinyllysine mark. Lysine 508 bears the N6-acetyllysine; alternate mark. At lysine 508 the chain carries N6-succinyllysine; alternate. Cysteine 521 is lipidated: S-(15-deoxy-Delta12,14-prostaglandin J2-9-yl)cysteine. The active-site Proton acceptor is the histidine 523. The Microbody targeting signal signature appears at serine 552–isoleucine 554. An N6-succinyllysine modification is found at lysine 553.

This sequence belongs to the AB hydrolase superfamily. Epoxide hydrolase family. Homodimer. Mg(2+) serves as cofactor. The N-terminus is blocked. In terms of processing, the covalent modification of cysteine by 15-deoxy-Delta12,14-prostaglandin-J2 is autocatalytic and reversible. It may occur as an alternative to other cysteine modifications, such as S-nitrosylation and S-palmitoylation. As to expression, detected in liver, intestine, ovary and kidney. Detected at low levels in heart and muscle.

The protein resides in the cytoplasm. Its subcellular location is the peroxisome. The enzyme catalyses an epoxide + H2O = an ethanediol. It catalyses the reaction (9S,10S)-10-hydroxy-9-(phosphooxy)octadecanoate + H2O = (9S,10S)-9,10-dihydroxyoctadecanoate + phosphate. It carries out the reaction 8-hydroxy-(11S,12S)-epoxy-(5Z,9E,14Z)-eicosatrienoate + H2O = (8,11R,12S)-trihydroxy-(5Z,9E,14Z)-eicosatrienoate. The catalysed reaction is 10-hydroxy-(11S,12S)-epoxy- (5Z,8Z,14Z)-eicosatrienoate + H2O = (10,11S,12R)-trihydroxy-(5Z,8Z,14Z)-eicosatrienoate. The enzyme catalyses (8S,9R)-epoxy-(5Z,11Z,14Z)-eicosatrienoate + H2O = (8S,9S)-dihydroxy-(5Z,11Z,14Z)-eicosatrienoate. It catalyses the reaction (11S,12R)-epoxy-(5Z,8Z,14Z)-eicosatrienoate + H2O = (11R,12R)-dihydroxy-(5Z,8Z,14Z)-eicosatrienoate. It carries out the reaction (11S,12R)-epoxy-(5Z,8Z,14Z)-eicosatrienoate + H2O = (11S,12S)-dihydroxy-(5Z,8Z,14Z)-eicosatrienoate. The catalysed reaction is (14S,15R)-epoxy-(5Z,8Z,11Z)-eicosatrienoate + H2O = (14R,15R)-dihydroxy-(5Z,8Z,11Z)-eicosatrienoate. The enzyme catalyses (14S,15R)-epoxy-(5Z,8Z,11Z)-eicosatrienoate + H2O = (14S,15S)-dihydroxy-(5Z,8Z,11Z)-eicosatrienoate. It catalyses the reaction (11R,12S)-epoxy-(5Z,8Z,14Z)-eicosatrienoate + H2O = (11S,12S)-dihydroxy-(5Z,8Z,14Z)-eicosatrienoate. It carries out the reaction (11R,12S)-epoxy-(5Z,8Z,14Z)-eicosatrienoate + H2O = (11R,12R)-dihydroxy-(5Z,8Z,14Z)-eicosatrienoate. The catalysed reaction is (8S,9R)-epoxy-(5Z,11Z,14Z)-eicosatrienoate + H2O = (8R,9R)-dihydroxy-(5Z,11Z,14Z)-eicosatrienoate. The enzyme catalyses 12-phosphooxy-(9Z)-octadecenoate + H2O = 12-hydroxy-(9Z)-octadecenoate + phosphate. It catalyses the reaction 12-phosphooxy-(9E)-octadecenoate + H2O = 12-hydroxy-(9E)-octadecenoate + phosphate. It carries out the reaction 12-(phosphooxy)octadecanoate + H2O = 12-hydroxyoctadecanoate + phosphate. The catalysed reaction is 8,9-epoxy-(5Z,11Z,14Z)-eicosatrienoate + H2O = 8,9-dihydroxy-(5Z,11Z,14Z)-eicosatrienoate. The enzyme catalyses 11,12-epoxy-(5Z,8Z,14Z)-eicosatrienoate + H2O = 11,12-dihydroxy-(5Z,8Z,14Z)-eicosatrienoate. It catalyses the reaction 14,15-epoxy-(5Z,8Z,11Z)-eicosatrienoate + H2O = 14,15-dihydroxy-(5Z,8Z,11Z)-eicosatrienoate. It carries out the reaction 9,10-epoxy-(12Z)-octadecenoate + H2O = 9,10-dihydroxy-(12Z)-octadecenoate. The catalysed reaction is 1-tetradecanoyl-sn-glycerol 3-phosphate + H2O = 1-tetradecanoyl-sn-glycerol + phosphate. The enzyme catalyses 1-octadecanoyl-sn-glycero-3-phosphate + H2O = 1-octadecanoyl-sn-glycerol + phosphate. It catalyses the reaction 1-(5Z,8Z,11Z,14Z-eicosatetraenoyl)-sn-glycero-3-phosphate + H2O = 1-(5Z,8Z,11Z,14Z-eicosatetraenoyl)-sn-glycerol + phosphate. It carries out the reaction 1-hexadecanoyl-sn-glycero-3-phosphate + H2O = 1-hexadecanoyl-sn-glycerol + phosphate. The catalysed reaction is 1-(9Z-octadecenoyl)-sn-glycero-3-phosphate + H2O = 1-(9Z-octadecenoyl)-sn-glycerol + phosphate. The enzyme catalyses (14R,15S)-epoxy-(5Z,8Z,11Z)-eicosatrienoate + H2O = (14R,15R)-dihydroxy-(5Z,8Z,11Z)-eicosatrienoate. With respect to regulation, inhibited by 1-(1-acetylpiperidin-4-yl)-3-(4-(trifl uoromethoxy)phenyl)urea (TPAU), 1-cyclohexyl-3-dodecylurea (CDU), 12-(3-adamantan-1-yl-ureido)-dodecanoic acid (AUDA), 1-((3S, 5S, 7S)-adamantan-1-yl)-3-(5-(2-(2-ethoxyethoxy) ethoxy)pentyl)urea (AEPU), N-adamantyl-N[']-cyclohexyl urea (ACU), 4-(((1S, 4S)-4-(3-((3S, 5S, 7S)-adamantan-1-yl) ureido)cyclohexyl)oxy)benzoic acid (c-AUCB), 4-(((1R, 4R)-4-(3-((3S, 5S, 7S)-adamantan-1-yl)ureido)cyclohexyl)oxy)benzoic acid (t-AUCB), 4-(((1R, 4R)-4-(3-(4(trifluoromethoxy)phenyl)ureido)cyclohexyl)oxy)benzoic acid (t-TAUCB) and to a lesser extent by 8-(3-((3S, 5S, 7S)-adamantan-1-yl)ureido) octanoic acid (AUOA). Phosphatase activity is inhibited by dodecyl-phosphate, phospholipids such as phospho-lysophosphatidic acids and fatty acids such as palmitic acid and lauric acid. Bifunctional enzyme. The C-terminal domain has epoxide hydrolase activity and acts on epoxides (alkene oxides, oxiranes) and arene oxides. Plays a role in xenobiotic metabolism by degrading potentially toxic epoxides. Also determines steady-state levels of physiological mediators. In terms of biological role, bifunctional enzyme. The N-terminal domain has lipid phosphatase activity, with the highest activity towards threo-9,10-phosphonooxy-hydroxy-octadecanoic acid, followed by erythro-9,10-phosphonooxy-hydroxy-octadecanoic acid, 12-phosphonooxy-octadec-9Z-enoic acid and 12-phosphonooxy-octadec-9E-enoic acid. Has phosphatase activity toward lyso-glycerophospholipids with also some lower activity toward lysolipids of sphingolipid and isoprenoid phosphates. The chain is Bifunctional epoxide hydrolase 2 from Mus musculus (Mouse).